An 833-amino-acid chain; its full sequence is MSPEKQPQEEDEVDSVLLSASKILNSSEGVKESGCSGTEYGCIAESENQIQPQSALKVLQHQLESFQALRMQTLQNVSMVQSEISEILNKSIIEVENPQFGSEKNLAFGARIEKDLPTENQEGNLSMEKSRHFKDSKTLHSVEEKLSGDSVNSLSQNINVPSQMHFEDTLTLRTSTDNLSSNIIIHPSENSDILKNYNNFYHFLPTAPQNVMSQADTVILDKSKITVPFLKHGFCENLDDICHSIEQMKEELQKSHDREVALANELQTLKTDPNVQSNDKYDLSPIHQEKMNFIKEENMDGNLNEDIKSKRISELEALVNKLLPFRETVSKFHVNFCRKCKKLSKSEIHRGKRNEKNNKEIPITGKNITDLKFHSRVPRYTLSFLDQTKHEMKDKERQPFLVKQGSIIFENEKTSKVNSVTEQCVAKIQYLQNYLKESVQIQKKVTELENENLNLKSKMKPLIFTTQSLIQKVETYEKQLKNLVEEKSTIQSKLSKTEEDSKECLKELKKIIGKYNVLQGQNKTLEEKNIQLSLEKQQMMEAFDQLKSKEHKTQSDMAIVNNENNLMSIEMEAMKTNILLIQDEKEMLEKKTHQLLKEKSSLENELKENQLEVMQLKEKERLAKTEQETLLQIIETVKDEKLNLETTLQESAAARQIMEREIENIQTYQSTAEENFLQEIKNAKSEASIYKNSLSEIGKECEMLSKMVMETKTDNQILKEELKKHSQENVKFENSISRLTEDKILLENYVRSIENERDTLEFEMRNLQREYLNLSDKICSQHNDPSKSTYISRREKFHFDNYIHEDISSPRSRPLASDLKGYLKVKDRTLKHH.

The stretch at 431-778 (LQNYLKESVQ…REYLNLSDKI (348 aa)) forms a coiled coil.

It localises to the nucleus. The chain is Coiled-coil domain-containing protein 110 (CCDC110) from Macaca fascicularis (Crab-eating macaque).